A 327-amino-acid polypeptide reads, in one-letter code: Undecaprenyl-phosphate 4-deoxy-4-formamido-L-arabinose transferase (327 aa).

Helical transmembrane passes span isoleucine 233–isoleucine 253 and valine 268–leucine 288.

It belongs to the glycosyltransferase 2 family.

The protein resides in the cell inner membrane. The enzyme catalyses UDP-4-deoxy-4-formamido-beta-L-arabinose + di-trans,octa-cis-undecaprenyl phosphate = 4-deoxy-4-formamido-alpha-L-arabinopyranosyl di-trans,octa-cis-undecaprenyl phosphate + UDP. It participates in glycolipid biosynthesis; 4-amino-4-deoxy-alpha-L-arabinose undecaprenyl phosphate biosynthesis; 4-amino-4-deoxy-alpha-L-arabinose undecaprenyl phosphate from UDP-4-deoxy-4-formamido-beta-L-arabinose and undecaprenyl phosphate: step 1/2. It functions in the pathway bacterial outer membrane biogenesis; lipopolysaccharide biosynthesis. Catalyzes the transfer of 4-deoxy-4-formamido-L-arabinose from UDP to undecaprenyl phosphate. The modified arabinose is attached to lipid A and is required for resistance to polymyxin and cationic antimicrobial peptides. The chain is Undecaprenyl-phosphate 4-deoxy-4-formamido-L-arabinose transferase from Pectobacterium carotovorum subsp. carotovorum (strain PC1).